We begin with the raw amino-acid sequence, 194 residues long: dCTP deaminase (194 aa).

Residues 110 to 115, aspartate 128, 136 to 138, tyrosine 171, lysine 178, and glutamine 182 contribute to the dCTP site; these read RSSLAR and VLE. Glutamate 138 acts as the Proton donor/acceptor in catalysis. Residues 173 to 194 are disordered; the sequence is SRQDAKYKNQQSAVASRINQDR. A compositionally biased stretch (polar residues) spans 180 to 194; it reads KNQQSAVASRINQDR.

Belongs to the dCTP deaminase family. In terms of assembly, homotrimer.

It catalyses the reaction dCTP + H2O + H(+) = dUTP + NH4(+). Its pathway is pyrimidine metabolism; dUMP biosynthesis; dUMP from dCTP (dUTP route): step 1/2. Its function is as follows. Catalyzes the deamination of dCTP to dUTP. In Actinobacillus succinogenes (strain ATCC 55618 / DSM 22257 / CCUG 43843 / 130Z), this protein is dCTP deaminase.